The sequence spans 237 residues: Dihydroceramide fatty acyl 2-hydroxylase FAH1 (237 aa).

The next 2 helical transmembrane spans lie at 50–70 and 80–100; these read LTLTVWWAVPVIWLPVVVWCI and LPEIVPIVVMGIFIWTFFEYV. The Zn(2+) site is built by His102, His107, His123, His126, and His127. The next 2 membrane-spanning stretches (helical) occupy residues 137-157 and 164-184; these read VFPPTATAILCFPFWNIAKAI and PALFGGGMLGYVMYDVTHYYL. Zn(2+) is bound by residues His181, His185, His201, His204, and His205.

This sequence belongs to the sterol desaturase family. Interacts with CYTB5-A, CYTB5-B, CYTB5-C and CYTB5-D. Interacts indirectly with BI-1 via CYTB5-D. Zn(2+) serves as cofactor. As to expression, expressed in leaves, roots, flowers and seeds.

It localises to the endoplasmic reticulum membrane. It carries out the reaction an N-(1,2-saturated acyl)sphinganine + 2 Fe(II)-[cytochrome b5] + O2 + 2 H(+) = an N-[(2'R)-hydroxyacyl]sphinganine + 2 Fe(III)-[cytochrome b5] + H2O. Fatty acid 2-hydroxylase involved in the alpha-hydroxylation of sphingolipid-associated very long-chain fatty acids (VLCFA). Probably involved in the resistance response to oxidative stress. This is Dihydroceramide fatty acyl 2-hydroxylase FAH1 from Arabidopsis thaliana (Mouse-ear cress).